A 203-amino-acid polypeptide reads, in one-letter code: MKLRWFAFLIVLLAGCSSKHDYTNPPWNAKVPVQRAMQWMPISQKAGAAWGVDPQLITAIIAIESGGNPNAVSKSNAIGLMQLKASTSGRDVYRRMGWSGEPTTSELKNPERNISMGAAYLNILETGPLAGIEDPKVLQYALVVSYANGAGALLRTFSSDRKKAISKINDLDADEFLDHVARNHPAPQAPRYIYKLEQALDAM.

An N-terminal signal peptide occupies residues 1-15; sequence MKLRWFAFLIVLLAG. The N-palmitoyl cysteine moiety is linked to residue Cys-16. Cys-16 is lipidated: S-diacylglycerol cysteine.

This sequence belongs to the transglycosylase Slt family.

It localises to the cell outer membrane. The enzyme catalyses Endolytic cleavage of the (1-&gt;4)-beta-glycosidic linkage between N-acetylmuramic acid (MurNAc) and N-acetylglucosamine (GlcNAc) residues in peptidoglycan with concomitant formation of a 1,6-anhydrobond in the MurNAc residue.. In terms of biological role, murein-degrading enzyme. May play a role in recycling of muropeptides during cell elongation and/or cell division. Preferentially cleaves at a distance of more than two disaccharide units from the ends of the glycan chain. This is Endo-type membrane-bound lytic murein transglycosylase A from Shigella boydii serotype 4 (strain Sb227).